The primary structure comprises 424 residues: Glutamate-1-semialdehyde 2,1-aminomutase (424 aa).

N6-(pyridoxal phosphate)lysine is present on Lys-263.

The protein belongs to the class-III pyridoxal-phosphate-dependent aminotransferase family. HemL subfamily. In terms of assembly, homodimer. The cofactor is pyridoxal 5'-phosphate.

It is found in the cytoplasm. The catalysed reaction is (S)-4-amino-5-oxopentanoate = 5-aminolevulinate. Its pathway is porphyrin-containing compound metabolism; protoporphyrin-IX biosynthesis; 5-aminolevulinate from L-glutamyl-tRNA(Glu): step 2/2. The protein is Glutamate-1-semialdehyde 2,1-aminomutase of Campylobacter jejuni subsp. jejuni serotype O:23/36 (strain 81-176).